The following is a 305-amino-acid chain: UDP-3-O-acyl-N-acetylglucosamine deacetylase (305 aa).

Residues H79, H238, and D242 each contribute to the Zn(2+) site. The Proton donor role is filled by H265.

Belongs to the LpxC family. The cofactor is Zn(2+).

The enzyme catalyses a UDP-3-O-[(3R)-3-hydroxyacyl]-N-acetyl-alpha-D-glucosamine + H2O = a UDP-3-O-[(3R)-3-hydroxyacyl]-alpha-D-glucosamine + acetate. The protein operates within glycolipid biosynthesis; lipid IV(A) biosynthesis; lipid IV(A) from (3R)-3-hydroxytetradecanoyl-[acyl-carrier-protein] and UDP-N-acetyl-alpha-D-glucosamine: step 2/6. Catalyzes the hydrolysis of UDP-3-O-myristoyl-N-acetylglucosamine to form UDP-3-O-myristoylglucosamine and acetate, the committed step in lipid A biosynthesis. In Shigella boydii serotype 4 (strain Sb227), this protein is UDP-3-O-acyl-N-acetylglucosamine deacetylase.